A 74-amino-acid polypeptide reads, in one-letter code: Translation initiation factor IF-1, chloroplastic (74 aa).

One can recognise an S1-like domain in the interval 1-72 (MEKQNIIEME…TKGRITYRLR (72 aa)).

Belongs to the IF-1 family. In terms of assembly, component of the 30S ribosomal translation pre-initiation complex which assembles on the 30S ribosome in the order IF-2 and IF-3, IF-1 and N-formylmethionyl-tRNA(fMet); mRNA recruitment can occur at any time during PIC assembly.

It localises to the plastid. The protein localises to the chloroplast. Its function is as follows. One of the essential components for the initiation of protein synthesis. Stabilizes the binding of IF-2 and IF-3 on the 30S subunit to which N-formylmethionyl-tRNA(fMet) subsequently binds. Helps modulate mRNA selection, yielding the 30S pre-initiation complex (PIC). Upon addition of the 50S ribosomal subunit IF-1, IF-2 and IF-3 are released leaving the mature 70S translation initiation complex. This Chlorokybus atmophyticus (Soil alga) protein is Translation initiation factor IF-1, chloroplastic.